Consider the following 214-residue polypeptide: Probable transaldolase (214 aa).

Residue Lys83 is the Schiff-base intermediate with substrate of the active site.

Belongs to the transaldolase family. Type 3B subfamily.

It is found in the cytoplasm. It catalyses the reaction D-sedoheptulose 7-phosphate + D-glyceraldehyde 3-phosphate = D-erythrose 4-phosphate + beta-D-fructose 6-phosphate. Its pathway is carbohydrate degradation; pentose phosphate pathway; D-glyceraldehyde 3-phosphate and beta-D-fructose 6-phosphate from D-ribose 5-phosphate and D-xylulose 5-phosphate (non-oxidative stage): step 2/3. Transaldolase is important for the balance of metabolites in the pentose-phosphate pathway. In Clostridium tetani (strain Massachusetts / E88), this protein is Probable transaldolase.